We begin with the raw amino-acid sequence, 510 residues long: NAD(P)H-quinone oxidoreductase subunit 2 B, chloroplastic (510 aa).

The next 13 helical transmembrane spans lie at Leu24–Leu44, Ile57–Phe77, Ile99–Ile119, Met124–Cys144, Leu149–Tyr169, Tyr183–Gly203, Pro227–Ala247, Trp295–Ile315, Met323–Asp343, Gly347–Ala367, Ala395–Phe415, Leu418–Leu438, and Met484–Ile504.

It belongs to the complex I subunit 2 family. NDH is composed of at least 16 different subunits, 5 of which are encoded in the nucleus.

The protein resides in the plastid. The protein localises to the chloroplast thylakoid membrane. The enzyme catalyses a plastoquinone + NADH + (n+1) H(+)(in) = a plastoquinol + NAD(+) + n H(+)(out). The catalysed reaction is a plastoquinone + NADPH + (n+1) H(+)(in) = a plastoquinol + NADP(+) + n H(+)(out). Its function is as follows. NDH shuttles electrons from NAD(P)H:plastoquinone, via FMN and iron-sulfur (Fe-S) centers, to quinones in the photosynthetic chain and possibly in a chloroplast respiratory chain. The immediate electron acceptor for the enzyme in this species is believed to be plastoquinone. Couples the redox reaction to proton translocation, and thus conserves the redox energy in a proton gradient. This chain is NAD(P)H-quinone oxidoreductase subunit 2 B, chloroplastic, found in Buxus microphylla (Littleleaf boxwood).